Consider the following 24-residue polypeptide: Cytochrome c oxidase subunit 5A-2, mitochondrial (24 aa).

The protein belongs to the cytochrome c oxidase subunit 5A family. Component of the cytochrome c oxidase (complex IV, CIV), a multisubunit enzyme composed of 14 subunits. The complex is composed of a catalytic core of 3 subunits MT-CO1, MT-CO2 and MT-CO3, encoded in the mitochondrial DNA, and 11 supernumerary subunits COX4I, COX5A, COX5B, COX6A, COX6B, COX6C, COX7A, COX7B, COX7C, COX8 and NDUFA4, which are encoded in the nuclear genome. The complex exists as a monomer or a dimer and forms supercomplexes (SCs) in the inner mitochondrial membrane with NADH-ubiquinone oxidoreductase (complex I, CI) and ubiquinol-cytochrome c oxidoreductase (cytochrome b-c1 complex, complex III, CIII), resulting in different assemblies (supercomplex SCI(1)III(2)IV(1) and megacomplex MCI(2)III(2)IV(2)).

The protein localises to the mitochondrion inner membrane. It functions in the pathway energy metabolism; oxidative phosphorylation. Component of the cytochrome c oxidase, the last enzyme in the mitochondrial electron transport chain which drives oxidative phosphorylation. The respiratory chain contains 3 multisubunit complexes succinate dehydrogenase (complex II, CII), ubiquinol-cytochrome c oxidoreductase (cytochrome b-c1 complex, complex III, CIII) and cytochrome c oxidase (complex IV, CIV), that cooperate to transfer electrons derived from NADH and succinate to molecular oxygen, creating an electrochemical gradient over the inner membrane that drives transmembrane transport and the ATP synthase. Cytochrome c oxidase is the component of the respiratory chain that catalyzes the reduction of oxygen to water. Electrons originating from reduced cytochrome c in the intermembrane space (IMS) are transferred via the dinuclear copper A center (CU(A)) of subunit 2 and heme A of subunit 1 to the active site in subunit 1, a binuclear center (BNC) formed by heme A3 and copper B (CU(B)). The BNC reduces molecular oxygen to 2 water molecules using 4 electrons from cytochrome c in the IMS and 4 protons from the mitochondrial matrix. This chain is Cytochrome c oxidase subunit 5A-2, mitochondrial, found in Thunnus obesus (Bigeye tuna).